The sequence spans 434 residues: Iron transporter MagA (434 aa).

The next 10 helical transmembrane spans lie at 6-26, 31-51, 56-76, 86-106, 113-133, 176-196, 269-289, 294-314, 321-341, and 357-377; these read PELT…GMMT, PAVV…FGLV, AVAT…GMKL, KTAI…ALLL, SLGL…AVVI, LLPA…LLFW, SVLL…KFIW, TVLT…VTAL, WPSA…SFLL, and KLVV…LFTM.

The protein belongs to the monovalent cation:proton antiporter 2 (CPA2) transporter (TC 2.A.37) family.

It is found in the membrane. Its function is as follows. Iron transporter, which is required for the synthesis of bacterial magnetic particles (BMPs). Probably involved in the transport of iron from the environment into the cytoplasm across the cell membrane, and then from the cytoplasm into the BMP lipid vesicle across the BMP membrane. The polypeptide is Iron transporter MagA (magA) (Paramagnetospirillum magneticum (strain ATCC 700264 / AMB-1) (Magnetospirillum magneticum)).